The following is a 367-amino-acid chain: Nodulation protein 10 (367 aa).

The next 11 membrane-spanning stretches (helical) occupy residues 15-37 (FDLLRLFAACQVMFSHAWNWLHL), 46-66 (VFDLLFSAPGVAIFFLISGFL), 88-108 (IFPALFVNIAVMELALLVTGG), 109-129 (LNVTGILQYLFYFTVYILTAA), 155-175 (VLWTLTVELTFYLTLPMLLEI), 183-203 (GALVVAVAALGSWVMAQHFNI), 208-228 (NPFLSVTAGPTFWIFSMGVLA), 245-265 (WWLATHLAITWWVAGTSAAFI), 270-290 (AAPVDAFRIAVLAGLVLSAAH), 312-332 (MLVMHTLIAIGWVGHWWLWIV), and 335-355 (VGTVALAALSWALIEQPAMKL).

Belongs to the acyltransferase 3 family.

The protein resides in the cell membrane. Its function is as follows. Not known. NodX allows Rhizobium leguminosarum biovar viciae strain TOM to nodulate Afghanistan peas. This is Nodulation protein 10 (nodX) from Rhizobium leguminosarum bv. viciae.